The chain runs to 608 residues: DNA mismatch repair protein MutL (608 aa).

The protein belongs to the DNA mismatch repair MutL/HexB family.

This protein is involved in the repair of mismatches in DNA. It is required for dam-dependent methyl-directed DNA mismatch repair. May act as a 'molecular matchmaker', a protein that promotes the formation of a stable complex between two or more DNA-binding proteins in an ATP-dependent manner without itself being part of a final effector complex. The sequence is that of DNA mismatch repair protein MutL from Anoxybacillus flavithermus (strain DSM 21510 / WK1).